The sequence spans 462 residues: tRNA modification GTPase MnmE (462 aa).

(6S)-5-formyl-5,6,7,8-tetrahydrofolate contacts are provided by R23, E88, and R127. Residues 224–383 (GLATVIIGRP…LEKAIADLFF (160 aa)) enclose the TrmE-type G domain. N234 is a K(+) binding site. Residues 234–239 (NVGKSS), 253–259 (TDIPGTT), and 278–281 (DTAG) each bind GTP. Residue S238 coordinates Mg(2+). K(+) contacts are provided by T253, I255, and T258. Mg(2+) is bound at residue T259. K462 contributes to the (6S)-5-formyl-5,6,7,8-tetrahydrofolate binding site.

This sequence belongs to the TRAFAC class TrmE-Era-EngA-EngB-Septin-like GTPase superfamily. TrmE GTPase family. As to quaternary structure, homodimer. Heterotetramer of two MnmE and two MnmG subunits. The cofactor is K(+).

Its subcellular location is the cytoplasm. Functionally, exhibits a very high intrinsic GTPase hydrolysis rate. Involved in the addition of a carboxymethylaminomethyl (cmnm) group at the wobble position (U34) of certain tRNAs, forming tRNA-cmnm(5)s(2)U34. This is tRNA modification GTPase MnmE from Geobacillus kaustophilus (strain HTA426).